Here is a 141-residue protein sequence, read N- to C-terminus: Large ribosomal subunit protein uL16 (141 aa).

The protein belongs to the universal ribosomal protein uL16 family. As to quaternary structure, part of the 50S ribosomal subunit.

In terms of biological role, binds 23S rRNA and is also seen to make contacts with the A and possibly P site tRNAs. In Aliarcobacter butzleri (strain RM4018) (Arcobacter butzleri), this protein is Large ribosomal subunit protein uL16.